Reading from the N-terminus, the 215-residue chain is Cytochrome b6 (215 aa).

Residues 32–52 (IFYCLGGITLTCFLVQVATGF) form a helical membrane-spanning segment. Cys-35 contacts heme c. Heme b-binding residues include His-86 and His-100. The next 3 membrane-spanning stretches (helical) occupy residues 90–110 (ASMM…TGGF), 116–136 (LTWV…VTGY), and 186–206 (LHTF…FPMI). Residues His-187 and His-202 each contribute to the heme b site.

Belongs to the cytochrome b family. PetB subfamily. The 4 large subunits of the cytochrome b6-f complex are cytochrome b6, subunit IV (17 kDa polypeptide, PetD), cytochrome f and the Rieske protein, while the 4 small subunits are PetG, PetL, PetM and PetN. The complex functions as a dimer. Heme b serves as cofactor. The cofactor is heme c.

Its subcellular location is the plastid. The protein resides in the chloroplast thylakoid membrane. Functionally, component of the cytochrome b6-f complex, which mediates electron transfer between photosystem II (PSII) and photosystem I (PSI), cyclic electron flow around PSI, and state transitions. The sequence is that of Cytochrome b6 from Agrostis stolonifera (Creeping bentgrass).